The chain runs to 129 residues: MAPKAEKKPASKAPAEKKPAAKKTASSDSKKRTKTRKETYSSYIYKVLKQTHPDTGISQKAMSIMNSFVNDIFERVASEASKLAAYNKKSTISAREIQTAVRLILPGELAKHAVSEATRTITKYSSAAN.

Residues 1 to 19 show a composition bias toward basic and acidic residues; it reads MAPKAEKKPASKAPAEKKP. The tract at residues 1–37 is disordered; it reads MAPKAEKKPASKAPAEKKPAAKKTASSDSKKRTKTRK. Residues Lys-7 and Lys-8 each carry the N6-acetyllysine; alternate modification. Residues Lys-7 and Lys-8 each participate in a glycyl lysine isopeptide (Lys-Gly) (interchain with G-Cter in SUMO); alternate cross-link. Ser-11 bears the Phosphoserine mark. Position 12 is an N6-acetyllysine (Lys-12). Residue Lys-17 is modified to N6-acetyllysine; alternate. Residue Lys-17 forms a Glycyl lysine isopeptide (Lys-Gly) (interchain with G-Cter in SUMO); alternate linkage. A Glycyl lysine isopeptide (Lys-Gly) (interchain with G-Cter in SUMO) cross-link involves residue Lys-18. Lys-123 participates in a covalent cross-link: Glycyl lysine isopeptide (Lys-Gly) (interchain with G-Cter in ubiquitin).

The protein belongs to the histone H2B family. The nucleosome is a histone octamer containing two molecules each of H2A, H2B, H3 and H4 assembled in one H3-H4 heterotetramer and two H2A-H2B heterodimers. The octamer wraps approximately 147 bp of DNA. Monoubiquitinated by the UBC2-BRE1 complex to form H2BK123ub1. H2BK123ub1 gives a specific tag for epigenetic transcriptional activation and is also prerequisite for H3K4me and H3K79me formation. H2BK123ub1 also modulates the formation of double-strand breaks during meiosis and is a prerequisite for DNA-damage checkpoint activation. Post-translationally, phosphorylated by STE20 to form H2BS10ph during progression through meiotic prophase. May be correlated with chromosome condensation. In terms of processing, acetylated by GCN5 to form H2BK11ac and H2BK16ac. H2BK16ac can also be formed by ESA1. Acetylation of N-terminal lysines and particularly formation of H2BK11acK16ac has a positive effect on transcription. Sumoylation to form H2BK6su or H2BK7su, and probably also H2BK16su or H2BK17su, occurs preferentially near the telomeres and represses gene transcription.

The protein resides in the nucleus. The protein localises to the chromosome. Core component of nucleosome. Nucleosomes wrap and compact DNA into chromatin, limiting DNA accessibility to the cellular machineries which require DNA as a template. Histones thereby play a central role in transcription regulation, DNA repair, DNA replication and chromosomal stability. DNA accessibility is regulated via a complex set of post-translational modifications of histones, also called histone code, and nucleosome remodeling. In Meyerozyma guilliermondii (strain ATCC 6260 / CBS 566 / DSM 6381 / JCM 1539 / NBRC 10279 / NRRL Y-324) (Yeast), this protein is Histone H2B.2 (HTB2).